A 393-amino-acid polypeptide reads, in one-letter code: Cytochrome b (393 aa).

Transmembrane regions (helical) follow at residues 33–53 (FGSL…FLAM), 77–98 (WFLR…YLHM), 113–133 (WNIG…GYVL), and 178–198 (FFAI…LHLL). Positions 83 and 97 each coordinate heme b. Residues His-182 and His-196 each contribute to the heme b site. His-201 is a binding site for a ubiquinone. 4 helical membrane-spanning segments follow: residues 226-246 (YKDV…ALFA), 288-308 (LGGV…PFIH), 320-340 (LSQL…WIGG), and 347-367 (FIII…ILMP).

It belongs to the cytochrome b family. The cytochrome bc1 complex contains 3 respiratory subunits (MT-CYB, CYC1 and UQCRFS1), 2 core proteins (UQCRC1 and UQCRC2) and probably 6 low-molecular weight proteins. The cofactor is heme b.

The protein resides in the mitochondrion inner membrane. Component of the ubiquinol-cytochrome c reductase complex (complex III or cytochrome b-c1 complex) that is part of the mitochondrial respiratory chain. The b-c1 complex mediates electron transfer from ubiquinol to cytochrome c. Contributes to the generation of a proton gradient across the mitochondrial membrane that is then used for ATP synthesis. The protein is Cytochrome b (mt-cyb) of Synbranchus marmoratus (Marbled swamp eel).